Here is an 81-residue protein sequence, read N- to C-terminus: Small ribosomal subunit protein bS16 (81 aa).

It belongs to the bacterial ribosomal protein bS16 family.

In Neisseria gonorrhoeae (strain ATCC 700825 / FA 1090), this protein is Small ribosomal subunit protein bS16.